Reading from the N-terminus, the 732-residue chain is MTSNLIKFDDQNKVFHLHNKQISYLLSIEDGGTLSHLYFGGAVKNYNNQLKYPRLDRGFSGNLPESLDRTFSRDSLPKEYSSAGEMDFHTPATIVRNPDGSNALFLAYKSYKIEDGKPDLKGLPHSWTKEDDEAQTLIVTLEDKVSKLEYDLLYTIYRDRPVIVRSVQVHNHGEEAVYLEKVASMQMDYVDKDFEVITLPGAHANERRVQRENIGQGIKVFSSYRGTSSHQMNPFMALVDHDTNEFMGEAYGFALAYSGNHKFEVERDQFGQIHVNTGINDYNFKWKLNPNEEFQTPEVLMVYSDQGLNKMSQAFHSLIHERIMRSKFKDQIRPVLVNNWEATYFDFNEDKLKTIVDKAKKLGLEMFVLDDGWFGHRDDDNSSLGDWKVYKKKFPNGLGHFADYVHEQGLKFGLWFEPEMISYESNLYKEHPDYLMHVPGRKPCPSRNQYVLELGRKEVRDNIFEQMVKILDSKKIDYIKWDMNRSLSDIYESDLPADQQGEAYHRYVLGYYDLLNKLVTRYPDILFEGCSGGGGRFDVGQAYYTPQIWASDNTDAIERLKIQYGTSLVYPQSMMTSHVSVSPNEQNGRITPFNTRGAVAMWGDLGYELDLTKMSDEESDQVVKQVTEYKKIREVTQFGTLYRLKASASNQCAWMMVDSNKNEAVVTVVNVMAHAQPYCTKTKLAGLDPDKRYKNLETDEVFGGDELMHLGFYDPIERGDFKAKMYHFKAIN.

Substrate contacts are provided by residues 370–371, Trp415, Arg447, 480–484, 530–533, and Asp552; these read DD, KWDMN, and CSGG. Asp482 (nucleophile) is an active-site residue. Asp552 functions as the Proton donor in the catalytic mechanism.

Belongs to the glycosyl hydrolase 36 family. Homotetramer.

It carries out the reaction Hydrolysis of terminal, non-reducing alpha-D-galactose residues in alpha-D-galactosides, including galactose oligosaccharides, galactomannans and galactolipids.. Hydrolyzes the short-chain alpha-galactosaccharide raffinose. In Lactobacillus acidophilus (strain ATCC 700396 / NCK56 / N2 / NCFM), this protein is Alpha-galactosidase Mel36A.